The chain runs to 1354 residues: MSTGDSFETRFEKIDNLLRDPKSEVNSDCLLDGLDALVYDLDFPALRKNKNIDNFLSRYKDTINKIRDLRMKAEDYEVVKVIGRGAFGEVQLVRHKSTRKVYAMKLLSKFEMIKRSDSAFFWEERDIMAFANSPWVVQLFYAFQDDRYLYMVMEYMPGGDLVNLMSNYDVPEKWARFYTAEVVLALDAIHSMGFIHRDVKPDNMLLDKSGHLKLADFGTCMKMNKEGMVRCDTAVGTPDYISPEVLKSQGGDGYYGRECDWWSVGVFLYEMLVGDTPFYADSLVGTYSKIMNHKNSLTFPDDNDISKEAKNLICAFLTDREVRLGRNGVEEIKRHLFFKNDQWAWETLRDTVAPVVPDLSSDIDTSNFDDLEEDKGDEETFPIPKAFVGNQLPFVGFTYYSNRRYLSPANPNDNRTSSNVDKSLQENLQKTIYKLEEQLHNEMQLKDEMEQKCRTSNIKLDKIMKELDEEGNQRRNLESTVSQIEKEKMLLQHRINEYQRKAEQENEKRRNVENEVSTLKDQLEDLKKVSQNSQLANEKLAQLQKQLEEANDLLRTESDTAVRLRKSHTEMSKSISQLESLNRELQERNRILENSKSQTDKDYYQLQAVLEAERRDRGHDSEMIGDLQARITSLQEEVKHLKYNLERMEGERKEAQDMLNHSEKEKNNLEIDLNYKLKSLQQRLEQEVNEHKVTKARLTDKHQSIEEAKSVAMCEMEKKLKEEREAREKAENRVVQIEKQCSMLDVDLKQSQQKLEHLTENKERMEDEVKNLTLQLEQESNKRLLLQNELKTQAFEADNLKGLEKQMKQEINTLLEAKRLLEFELAQLTKQYRGNEGQMRELQDQLEAEQYFSTLYKTQVKELKEEIEEKNRENLKKIQELQNEKETLATQLDLAETKAESEQLARGLLEEQYFELTQESKKAASRNRQEITDKDHAVSRLEETNSILTKDIELLRKENEELTDKMRKSEEEYKLQKEEEISNLKATYEKNINTERTLKTQAVNKLAEIMNRKDFKIDKKKANTQDLRKKEKENRKLQLELNQEREKFNQMVVKHQKELNDMQAQLVEECTHRNELQMQLASKESDIEQLRAKLSDLSDSTSVASFPSADETDPNLPESRIEGWLSVPNRGNIKRYGWKKQYVVVSSKKILFYNDEQDKEQSNPSMVLDIDKLFHVRPVTQGDVYRAETEEIPKIFQILYANEGECRKDVEVEPVQQAEKTNFQNHKGHEFIPTLYHFPANCEACAKPLWHVFKPPPALECRRCHVKCHRDHLDKKEDLISPCKVSYDVTSARDMLLLACSQDEQKKWVTHLVKKIPKNPPSGFVRASPRTLSTRSTANQSFRKVVKNTSGKTS.

An N-acetylserine modification is found at serine 2. Residues 76 to 338 (YEVVKVIGRG…VEEIKRHLFF (263 aa)) form the Protein kinase domain. Residues 82 to 90 (IGRGAFGEV) and lysine 105 contribute to the ATP site. The active-site Proton acceptor is aspartate 198. An AGC-kinase C-terminal domain is found at 341 to 409 (DQWAWETLRD…YSNRRYLSPA (69 aa)). Residues 368 to 727 (FDDLEEDKGD…KKLKEEREAR (360 aa)) form an interaction with FHOD1 region. Residues 422–692 (KSLQENLQKT…RLEQEVNEHK (271 aa)) are a coiled coil. In terms of domain architecture, REM-1 spans 479–556 (STVSQIEKEK…LEEANDLLRT (78 aa)). The segment at 707-946 (EAKSVAMCEM…AVSRLEETNS (240 aa)) is SHROOM3 binding. The 67-residue stretch at 949–1015 (TKDIELLRKE…LAEIMNRKDF (67 aa)) folds into the RhoBD domain. The RHOA binding stretch occupies residues 998–1010 (LKTQAVNKLAEIM). Positions 1011–1102 (NRKDFKIDKK…KLSDLSDSTS (92 aa)) form a coiled coil. The segment at 1101-1120 (TSVASFPSADETDPNLPESR) is disordered. Phosphoserine is present on residues serine 1105 and serine 1108. Positions 1115–1354 (NLPESRIEGW…VVKNTSGKTS (240 aa)) are auto-inhibitory. Residues 1118-1317 (ESRIEGWLSV…WVTHLVKKIP (200 aa)) enclose the PH domain. The segment at 1228–1283 (GHEFIPTLYHFPANCEACAKPLWHVFKPPPALECRRCHVKCHRDHLDKKEDLISPC) adopts a Phorbol-ester/DAG-type zinc-finger fold. Residue serine 1328 is modified to Phosphoserine. The interval 1333–1354 (STRSTANQSFRKVVKNTSGKTS) is disordered.

Belongs to the protein kinase superfamily. AGC Ser/Thr protein kinase family. Homodimer. Interacts with RHOA (activated by GTP), RHOB, RHOC, GEM, MYLC2B, RHOE, PPP1R12A, LIMK1, LIMK2, TSG101, CHORDC1, DAPK3, PFN1, PTEN and JIP3. Interacts with FHOD1 in a Src-dependent manner. Interacts with ITGB1BP1 (via N-terminus and PTB domain). Interacts with SHROOM3. The cofactor is Mg(2+). Post-translationally, autophosphorylated on serine and threonine residues. Cleaved by caspase-3 during apoptosis. This leads to constitutive activation of the kinase and membrane blebbing. As to expression, detected in corneal epithelium.

Its subcellular location is the cytoplasm. It localises to the cytoskeleton. It is found in the microtubule organizing center. The protein localises to the centrosome. The protein resides in the centriole. Its subcellular location is the golgi apparatus membrane. It localises to the cell projection. It is found in the bleb. The protein localises to the cell membrane. The protein resides in the lamellipodium. Its subcellular location is the ruffle. The catalysed reaction is L-seryl-[protein] + ATP = O-phospho-L-seryl-[protein] + ADP + H(+). It carries out the reaction L-threonyl-[protein] + ATP = O-phospho-L-threonyl-[protein] + ADP + H(+). With respect to regulation, activated by RHOA binding. Inhibited by Y-27632. Functionally, protein kinase which is a key regulator of the actin cytoskeleton and cell polarity. Involved in regulation of smooth muscle contraction, actin cytoskeleton organization, stress fiber and focal adhesion formation, neurite retraction, cell adhesion and motility via phosphorylation of DAPK3, GFAP, LIMK1, LIMK2, MYL9/MLC2, TPPP, PFN1 and PPP1R12A. Phosphorylates FHOD1 and acts synergistically with it to promote SRC-dependent non-apoptotic plasma membrane blebbing. Phosphorylates JIP3 and regulates the recruitment of JNK to JIP3 upon UVB-induced stress. Acts as a suppressor of inflammatory cell migration by regulating PTEN phosphorylation and stability. Acts as a negative regulator of VEGF-induced angiogenic endothelial cell activation. Required for centrosome positioning and centrosome-dependent exit from mitosis. Plays a role in terminal erythroid differentiation. Inhibits podocyte motility via regulation of actin cytoskeletal dynamics and phosphorylation of CFL1. Promotes keratinocyte terminal differentiation. Involved in osteoblast compaction through the fibronectin fibrillogenesis cell-mediated matrix assembly process, essential for osteoblast mineralization. May regulate closure of the eyelids and ventral body wall by inducing the assembly of actomyosin bundles. This chain is Rho-associated protein kinase 1 (ROCK1), found in Oryctolagus cuniculus (Rabbit).